We begin with the raw amino-acid sequence, 561 residues long: Putative transport protein YbjL (561 aa).

5 helical membrane passes run 8-28 (LLNG…LCLG), 32-52 (LGSI…LLGQ), 66-86 (FMLF…SIFF), 94-114 (MLAL…GKLF), and 158-178 (NLSL…IVGA). 2 RCK C-terminal domains span residues 200–288 (RGLD…SFRN) and 292–373 (VFDR…RIGF). The next 5 membrane-spanning stretches (helical) occupy residues 383–403 (LLAF…TFQF), 406–426 (FSFG…LGFM), 451–471 (VFMA…LGAI), 475–495 (MLIA…LFGA), and 540–560 (AIAN…WPGL).

This sequence belongs to the AAE transporter (TC 2.A.81) family. YbjL subfamily.

The protein localises to the cell membrane. This Shigella sonnei (strain Ss046) protein is Putative transport protein YbjL.